Consider the following 421-residue polypeptide: Serine--tRNA ligase (421 aa).

An L-serine-binding site is contributed by 227 to 229; that stretch reads TSE. Residues 257–259 and valine 273 each bind ATP; that span reads RRE. Glutamate 280 is a binding site for L-serine. 344–347 serves as a coordination point for ATP; it reads ELTS. Residue threonine 379 coordinates L-serine.

This sequence belongs to the class-II aminoacyl-tRNA synthetase family. Type-1 seryl-tRNA synthetase subfamily. Homodimer. The tRNA molecule binds across the dimer.

The protein resides in the cytoplasm. The catalysed reaction is tRNA(Ser) + L-serine + ATP = L-seryl-tRNA(Ser) + AMP + diphosphate + H(+). The enzyme catalyses tRNA(Sec) + L-serine + ATP = L-seryl-tRNA(Sec) + AMP + diphosphate + H(+). It participates in aminoacyl-tRNA biosynthesis; selenocysteinyl-tRNA(Sec) biosynthesis; L-seryl-tRNA(Sec) from L-serine and tRNA(Sec): step 1/1. In terms of biological role, catalyzes the attachment of serine to tRNA(Ser). Is also able to aminoacylate tRNA(Sec) with serine, to form the misacylated tRNA L-seryl-tRNA(Sec), which will be further converted into selenocysteinyl-tRNA(Sec). In Leifsonia xyli subsp. xyli (strain CTCB07), this protein is Serine--tRNA ligase.